Reading from the N-terminus, the 341-residue chain is Alanine racemase (341 aa).

K33 serves as the catalytic Proton acceptor; specific for D-alanine. K33 carries the post-translational modification N6-(pyridoxal phosphate)lysine. R126 is a substrate binding site. Y236 functions as the Proton acceptor; specific for L-alanine in the catalytic mechanism. Position 284 (M284) interacts with substrate.

The protein belongs to the alanine racemase family. Pyridoxal 5'-phosphate is required as a cofactor.

The catalysed reaction is L-alanine = D-alanine. It functions in the pathway amino-acid biosynthesis; D-alanine biosynthesis; D-alanine from L-alanine: step 1/1. Functionally, catalyzes the interconversion of L-alanine and D-alanine. This Aquifex pyrophilus protein is Alanine racemase (alr).